The primary structure comprises 281 residues: Pantothenate synthetase (281 aa).

ATP is bound at residue 30–37; sequence MGNLHQGH. The active-site Proton donor is His37. (R)-pantoate is bound at residue Gln61. Gln61 provides a ligand contact to beta-alanine. Position 149-152 (149-152) interacts with ATP; that stretch reads GNKD. Gln155 lines the (R)-pantoate pocket. Residues Ile178 and 186–189 contribute to the ATP site; that span reads MSSR.

Belongs to the pantothenate synthetase family. Homodimer.

The protein localises to the cytoplasm. It carries out the reaction (R)-pantoate + beta-alanine + ATP = (R)-pantothenate + AMP + diphosphate + H(+). It participates in cofactor biosynthesis; (R)-pantothenate biosynthesis; (R)-pantothenate from (R)-pantoate and beta-alanine: step 1/1. In terms of biological role, catalyzes the condensation of pantoate with beta-alanine in an ATP-dependent reaction via a pantoyl-adenylate intermediate. In Shewanella sp. (strain MR-7), this protein is Pantothenate synthetase.